The following is an 89-amino-acid chain: Small ribosomal subunit protein bS20 (89 aa).

Residues 1–22 (MANTASARKRIRQNERRRERNV) are disordered. A compositionally biased stretch (basic and acidic residues) spans 12 to 22 (RQNERRRERNV).

The protein belongs to the bacterial ribosomal protein bS20 family.

Binds directly to 16S ribosomal RNA. This Gluconobacter oxydans (strain 621H) (Gluconobacter suboxydans) protein is Small ribosomal subunit protein bS20.